The chain runs to 407 residues: Cation efflux system protein CusB (407 aa).

A signal peptide spans 1 to 28; the sequence is MKKIALIIGSMIAGGIISAAGFTWFAKA.

It belongs to the membrane fusion protein (MFP) (TC 8.A.1) family. The cus efflux system is composed of CusA, CusB, CusC and CusF.

Part of a cation efflux system that mediates resistance to copper and silver. This Escherichia coli O157:H7 protein is Cation efflux system protein CusB (cusB).